The chain runs to 257 residues: Hydroxyacylglutathione hydrolase (257 aa).

Zn(2+) is bound by residues His-54, His-56, Asp-58, His-59, His-110, Asp-131, and His-169.

Belongs to the metallo-beta-lactamase superfamily. Glyoxalase II family. In terms of assembly, monomer. It depends on Zn(2+) as a cofactor.

The catalysed reaction is an S-(2-hydroxyacyl)glutathione + H2O = a 2-hydroxy carboxylate + glutathione + H(+). It participates in secondary metabolite metabolism; methylglyoxal degradation; (R)-lactate from methylglyoxal: step 2/2. In terms of biological role, thiolesterase that catalyzes the hydrolysis of S-D-lactoyl-glutathione to form glutathione and D-lactic acid. In Hahella chejuensis (strain KCTC 2396), this protein is Hydroxyacylglutathione hydrolase.